The chain runs to 413 residues: Multifunctional CCA protein (413 aa).

Glycine 8 and arginine 11 together coordinate ATP. CTP-binding residues include glycine 8 and arginine 11. Mg(2+) is bound by residues aspartate 21 and aspartate 23. ATP-binding residues include arginine 91, arginine 137, and arginine 140. Residues arginine 91, arginine 137, and arginine 140 each contribute to the CTP site. An HD domain is found at threonine 225–tyrosine 326.

It belongs to the tRNA nucleotidyltransferase/poly(A) polymerase family. Bacterial CCA-adding enzyme type 1 subfamily. As to quaternary structure, monomer. Can also form homodimers and oligomers. Requires Mg(2+) as cofactor. It depends on Ni(2+) as a cofactor.

The enzyme catalyses a tRNA precursor + 2 CTP + ATP = a tRNA with a 3' CCA end + 3 diphosphate. It carries out the reaction a tRNA with a 3' CCA end + 2 CTP + ATP = a tRNA with a 3' CCACCA end + 3 diphosphate. In terms of biological role, catalyzes the addition and repair of the essential 3'-terminal CCA sequence in tRNAs without using a nucleic acid template. Adds these three nucleotides in the order of C, C, and A to the tRNA nucleotide-73, using CTP and ATP as substrates and producing inorganic pyrophosphate. tRNA 3'-terminal CCA addition is required both for tRNA processing and repair. Also involved in tRNA surveillance by mediating tandem CCA addition to generate a CCACCA at the 3' terminus of unstable tRNAs. While stable tRNAs receive only 3'-terminal CCA, unstable tRNAs are marked with CCACCA and rapidly degraded. In Nitrosospira multiformis (strain ATCC 25196 / NCIMB 11849 / C 71), this protein is Multifunctional CCA protein.